The chain runs to 794 residues: Protocadherin beta-6 (794 aa).

The first 27 residues, 1 to 27 (MMQTKVQNKKRQVAFFILLMLWGEVGS), serve as a signal peptide directing secretion. Topologically, residues 28–688 (ESIQYSVLEE…AQADLLTVYL (661 aa)) are extracellular. 5 consecutive Cadherin domains span residues 34–132 (VLEE…APEF), 137–241 (MLLK…VPEF), 246–345 (YEAQ…APEL), 350–449 (FISP…APAF), and 454–559 (YTLF…SPFV). N46 is a glycosylation site (N-linked (GlcNAc...) asparagine). C95 and C101 are disulfide-bonded. The N-linked (GlcNAc...) asparagine glycan is linked to N183. Residue N416 is glycosylated (N-linked (GlcNAc...) asparagine). N565 carries an N-linked (GlcNAc...) asparagine glycan. The region spanning 566 to 669 (GSAPCTELVP…LVDGFSQPYL (104 aa)) is the Cadherin 6 domain. Residues 689–709 (VVALASVSSLFLFSVLLFVAV) traverse the membrane as a helical segment. The Cytoplasmic portion of the chain corresponds to 710 to 794 (RLCRRSRAAS…PTSRNSFPFS (85 aa)). Positions 773–794 (PPQGTEREMEETPTSRNSFPFS) are disordered. Over residues 784-794 (TPTSRNSFPFS) the composition is skewed to polar residues.

In terms of assembly, forms homodimers in trans (molecules expressed by two different cells). Forms promiscuous heterodimers in cis (at the plasma membrane of the same cell) with other protocadherins.

The protein resides in the cell membrane. Functionally, calcium-dependent cell-adhesion protein involved in cells self-recognition and non-self discrimination. Thereby, it is involved in the establishment and maintenance of specific neuronal connections in the brain. This is Protocadherin beta-6 from Pan troglodytes (Chimpanzee).